Consider the following 159-residue polypeptide: Endoribonuclease YbeY (159 aa).

Residues H125, H129, and H135 each contribute to the Zn(2+) site.

The protein belongs to the endoribonuclease YbeY family. Requires Zn(2+) as cofactor.

Its subcellular location is the cytoplasm. Functionally, single strand-specific metallo-endoribonuclease involved in late-stage 70S ribosome quality control and in maturation of the 3' terminus of the 16S rRNA. The chain is Endoribonuclease YbeY from Ligilactobacillus salivarius (strain UCC118) (Lactobacillus salivarius).